The following is a 211-amino-acid chain: NADH-quinone oxidoreductase subunit I (211 aa).

Positions 1–27 are disordered; that stretch reads MANTDRPALPHKRAVPPSRADSGPRRR. 4Fe-4S ferredoxin-type domains lie at 71–101 and 117–146; these read LNRY…VEGA and RVYQ…MTYD. Residues Cys81, Cys84, Cys87, Cys91, Cys126, Cys129, Cys132, and Cys136 each contribute to the [4Fe-4S] cluster site.

It belongs to the complex I 23 kDa subunit family. In terms of assembly, NDH-1 is composed of 14 different subunits. Subunits NuoA, H, J, K, L, M, N constitute the membrane sector of the complex. [4Fe-4S] cluster serves as cofactor.

The protein localises to the cell membrane. It carries out the reaction a quinone + NADH + 5 H(+)(in) = a quinol + NAD(+) + 4 H(+)(out). In terms of biological role, NDH-1 shuttles electrons from NADH, via FMN and iron-sulfur (Fe-S) centers, to quinones in the respiratory chain. The immediate electron acceptor for the enzyme in this species is believed to be menaquinone. Couples the redox reaction to proton translocation (for every two electrons transferred, four hydrogen ions are translocated across the cytoplasmic membrane), and thus conserves the redox energy in a proton gradient. The chain is NADH-quinone oxidoreductase subunit I from Mycobacterium tuberculosis (strain ATCC 25177 / H37Ra).